Consider the following 140-residue polypeptide: Large ribosomal subunit protein uL13 (140 aa).

As to quaternary structure, part of the 50S ribosomal subunit.

This protein is one of the early assembly proteins of the 50S ribosomal subunit, although it is not seen to bind rRNA by itself. It is important during the early stages of 50S assembly. The chain is Large ribosomal subunit protein uL13 from Thermus thermophilus (strain ATCC 27634 / DSM 579 / HB8).